A 291-amino-acid polypeptide reads, in one-letter code: MNKDIATPGRTREILEKYGFSFKKSLGQNFLIDTNILRKIVDFAELSDETGAIEIGPGIGALTEQLARRAKKVVAFEIDQRLLPILEDTLSPYGNIRIIHQDVLKADIHRVISEEFTGMTDIMVVANLPYYVTTPIIMKLLTDRLPIRGMVVMLQKEVADRLAAKPGTKDYGSLSIAIQYYTEAETVMTVPRTVFIPQPNVDSAVIRLIKRKQPPVKVEDEAFFFQVVRASFAQRRKTILNNLVNNLPNGKAMKEQIERVLTETDIDPRRRGETLTMEEFAALSNALQHVL.

Residues Asn29, Leu31, Gly56, Glu77, Asp102, and Asn127 each coordinate S-adenosyl-L-methionine.

Belongs to the class I-like SAM-binding methyltransferase superfamily. rRNA adenine N(6)-methyltransferase family. RsmA subfamily.

The protein localises to the cytoplasm. It catalyses the reaction adenosine(1518)/adenosine(1519) in 16S rRNA + 4 S-adenosyl-L-methionine = N(6)-dimethyladenosine(1518)/N(6)-dimethyladenosine(1519) in 16S rRNA + 4 S-adenosyl-L-homocysteine + 4 H(+). Functionally, specifically dimethylates two adjacent adenosines (A1518 and A1519) in the loop of a conserved hairpin near the 3'-end of 16S rRNA in the 30S particle. May play a critical role in biogenesis of 30S subunits. The polypeptide is Ribosomal RNA small subunit methyltransferase A (Geobacillus sp. (strain WCH70)).